We begin with the raw amino-acid sequence, 622 residues long: Pheromone-processing carboxypeptidase KEX1 (622 aa).

Positions 1–23 (MAILSTVPALLFALASWAPTVAA) are cleaved as a signal peptide. Residues 24 to 509 (QSAADYFVHE…DEAKWKAYYR (486 aa)) lie on the Lumenal side of the membrane. Residue N111 is glycosylated (N-linked (GlcNAc...) asparagine). Catalysis depends on residues S175 and D375. N-linked (GlcNAc...) asparagine glycans are attached at residues N426 and N434. H437 is an active-site residue. Residues 465 to 492 (TPTDSRLDGEQGPATSVGDIGKNGTSAD) are disordered. N-linked (GlcNAc...) asparagine glycosylation occurs at N487. A helical transmembrane segment spans residues 510-530 (SGEIVLVIVIIAAGAWGWYVW). Over 531-622 (RERRKRRGYS…SRSNGGRSGR (92 aa)) the chain is Cytoplasmic. The segment at 539-622 (YSGIMGNTPP…SRSNGGRSGR (84 aa)) is disordered. Positions 559–571 (EGFRDRRTGRDVE) are enriched in basic and acidic residues.

Belongs to the peptidase S10 family.

It is found in the golgi apparatus. It localises to the trans-Golgi network membrane. It carries out the reaction Preferential release of a C-terminal arginine or lysine residue.. In terms of biological role, protease with a carboxypeptidase B-like function involved in the C-terminal processing of the lysine and arginine residues from protein precursors. Promotes cell fusion and is involved in the programmed cell death. In Colletotrichum graminicola (strain M1.001 / M2 / FGSC 10212) (Maize anthracnose fungus), this protein is Pheromone-processing carboxypeptidase KEX1 (KEX1).